The following is a 336-amino-acid chain: Zinc-type alcohol dehydrogenase-like protein SE_1777 (336 aa).

This sequence belongs to the zinc-containing alcohol dehydrogenase family. Quinone oxidoreductase subfamily.

The protein is Zinc-type alcohol dehydrogenase-like protein SE_1777 of Staphylococcus epidermidis (strain ATCC 12228 / FDA PCI 1200).